The primary structure comprises 494 residues: MHPPGFKNFLLLVSSLFFIGLSAAPQSFSPSLRSLSGAPCRLSRAESERRCRAPGQPPGSALCHDRGRCECGVCICHVTEPGTYFGPLCECHDWVCETYDGKTCAGHGTCDCGKCKCDVGWSGEACQYPTKCDLTKKISNQMCKNSQDVICSNAGTCHCGRCKCDNSDGHGLIYGKFCECDDRECIDDETEEICGGHGKCYCGNCYCEAGWHGDKCEFQCDITPWESKRRCTSPDGKVCSNRGTCVCGECSCHDVDPTGDWGDIHGDTCECDERDCRAVYDRYSDDFCSGHGQCNCGRCDCRAGWYGKKCEHPKNCPLSAEESTRKCQGSSDLPCSGRGRCECGRCTCYPPGDSRVYGKTCECDDRRCEDLDGVVCGGRGTCSCGRCVCEKGWFGKLCQHPRKCNMTEEQSRSLCESADGTLCSGKGSCHCGKCICSGEEWYISGEFCDCDDRDCDKHDGLICTGNGICSCGNCECWDGWNGNACEIWLGTEYP.

The N-terminal stretch at 1 to 23 (MHPPGFKNFLLLVSSLFFIGLSA) is a signal peptide. 40 cysteine pairs are disulfide-bonded: cysteine 40–cysteine 71, cysteine 51–cysteine 69, cysteine 63–cysteine 74, cysteine 76–cysteine 89, cysteine 91–cysteine 112, cysteine 96–cysteine 110, cysteine 104–cysteine 115, cysteine 117–cysteine 126, cysteine 132–cysteine 159, cysteine 143–cysteine 157, cysteine 151–cysteine 162, cysteine 164–cysteine 178, cysteine 180–cysteine 202, cysteine 185–cysteine 200, cysteine 194–cysteine 205, cysteine 207–cysteine 216, cysteine 220–cysteine 247, cysteine 231–cysteine 245, cysteine 239–cysteine 250, cysteine 252–cysteine 269, cysteine 271–cysteine 296, cysteine 276–cysteine 294, cysteine 288–cysteine 299, cysteine 301–cysteine 310, cysteine 316–cysteine 343, cysteine 327–cysteine 341, cysteine 335–cysteine 346, cysteine 348–cysteine 361, cysteine 363–cysteine 384, cysteine 368–cysteine 382, cysteine 376–cysteine 387, cysteine 389–cysteine 398, cysteine 404–cysteine 431, cysteine 415–cysteine 429, cysteine 423–cysteine 434, cysteine 436–cysteine 448, cysteine 450–cysteine 471, cysteine 455–cysteine 469, cysteine 463–cysteine 474, and cysteine 476–cysteine 485. I-EGF domains are found at residues 40-90 (CRLS…PLCE), 91-127 (CHDWVCETYDGKTCAGHGTCDCGKCKCDVGWSGEACQ), 132-179 (CDLT…KFCE), 180-217 (CDDRECIDDETEEICGGHGKCYCGNCYCEAGWHGDKCE), 220-270 (CDIT…DTCE), 271-311 (CDER…KKCE), 316-362 (CPLS…KTCE), 363-399 (CDDRRCEDLDGVVCGGRGTCSCGRCVCEKGWFGKLCQ), 404-449 (CNMT…EFCD), and 450-486 (CDDRDCDKHDGLICTGNGICSCGNCECWDGWNGNACE). One copy of the I repeat lies at 51-95 (CRAPGQPPGSALCHDRGRCECGVCICHVTEPGTYFGPLCECHDWV). Residues 51–494 (CRAPGQPPGS…CEIWLGTEYP (444 aa)) form a cysteine-rich tandem repeats region. One copy of the II repeat lies at 96–142 (CETYDGKTCAGHGTCDCGKCKCDVGWSGEACQYPTKCDLTKKISNQM). The III repeat unit spans residues 143-184 (CKNSQDVICSNAGTCHCGRCKCDNSDGHGLIYGKFCECDDRE). The stretch at 185–230 (CIDDETEEICGGHGKCYCGNCYCEAGWHGDKCEFQCDITPWESKRR) is one IV repeat. One copy of the V repeat lies at 231–275 (CTSPDGKVCSNRGTCVCGECSCHDVDPTGDWGDIHGDTCECDERD). The stretch at 276-326 (CRAVYDRYSDDFCSGHGQCNCGRCDCRAGWYGKKCEHPKNCPLSAEESTRK) is one VI repeat. Residues 327–367 (CQGSSDLPCSGRGRCECGRCTCYPPGDSRVYGKTCECDDRR) form a VII repeat. The VIII repeat unit spans residues 368-414 (CEDLDGVVCGGRGTCSCGRCVCEKGWFGKLCQHPRKCNMTEEQSRSL). N-linked (GlcNAc...) asparagine glycosylation occurs at asparagine 405. One copy of the IX repeat lies at 415–454 (CESADGTLCSGKGSCHCGKCICSGEEWYISGEFCDCDDRD). The stretch at 455–494 (CDKHDGLICTGNGICSCGNCECWDGWNGNACEIWLGTEYP) is one X repeat.

The protein localises to the secreted. This Rattus norvegicus (Rat) protein is Integrin beta-like protein 1 (Itgbl1).